The chain runs to 318 residues: Porphobilinogen deaminase (318 aa).

S-(dipyrrolylmethanemethyl)cysteine is present on Cys241.

It belongs to the HMBS family. Monomer. Dipyrromethane is required as a cofactor.

The enzyme catalyses 4 porphobilinogen + H2O = hydroxymethylbilane + 4 NH4(+). It participates in porphyrin-containing compound metabolism; protoporphyrin-IX biosynthesis; coproporphyrinogen-III from 5-aminolevulinate: step 2/4. Functionally, tetrapolymerization of the monopyrrole PBG into the hydroxymethylbilane pre-uroporphyrinogen in several discrete steps. The polypeptide is Porphobilinogen deaminase (Geobacter metallireducens (strain ATCC 53774 / DSM 7210 / GS-15)).